The following is a 357-amino-acid chain: DNA replication and repair protein RecF (357 aa).

30 to 37 (GPNGSGKT) serves as a coordination point for ATP.

It belongs to the RecF family.

The protein resides in the cytoplasm. Functionally, the RecF protein is involved in DNA metabolism; it is required for DNA replication and normal SOS inducibility. RecF binds preferentially to single-stranded, linear DNA. It also seems to bind ATP. The chain is DNA replication and repair protein RecF from Vibrio campbellii (strain ATCC BAA-1116).